We begin with the raw amino-acid sequence, 530 residues long: uncharacterized protein (530 aa).

2 stretches are compositionally biased toward basic and acidic residues: residues 1–11 (MTALNDTERAV) and 28–38 (PRSEETASERP). A disordered region spans residues 1-38 (MTALNDTERAVRNWTAGRPHRPAPMRPPRSEETASERP). Topologically, residues 1-50 (MTALNDTERAVRNWTAGRPHRPAPMRPPRSEETASERPSRYYPTWLPSRS) are cytoplasmic. Residues 51-71 (FIAAVIAIGGMQLLATMDSTV) traverse the membrane as a helical segment. Over 72–91 (AIVALPKIQNELSLSDAGRS) the chain is Extracellular. A helical membrane pass occupies residues 92–112 (WVITAYVLTFGGLMLLGGRLG). Topologically, residues 113-119 (DTIGRKR) are cytoplasmic. A helical transmembrane segment spans residues 120 to 140 (TFIVGVALFTISSVLCAVAWD). The Extracellular segment spans residues 141–150 (EATLVIARLS). A helical transmembrane segment spans residues 151-171 (QGVGSAIASPTGLALVATTFP). Over 172–180 (KGPARNAAT) the chain is Cytoplasmic. The chain crosses the membrane as a helical span at residues 181–201 (AVFAAMTAIGSVMGLVVGGAL). Residues 202-203 (TE) lie on the Extracellular side of the membrane. Residues 204–224 (VSWRWAFLVNVPIGLVMIYLA) traverse the membrane as a helical segment. The Cytoplasmic portion of the chain corresponds to 225 to 239 (RTALRETNKERMKLD). A helical membrane pass occupies residues 240 to 260 (ATGAILATLACTAAVFAFSIG). At 261–266 (PEKGWM) the chain is on the extracellular side. The helical transmembrane segment at 267–287 (SGITIGSGLVALAAAVAFVIV) threads the bilayer. Residues 288-306 (ERTAENPVVPFHLFRDRNR) are Cytoplasmic-facing. A helical membrane pass occupies residues 307–327 (LVTFSAILLAGGVMFSLTVCI). Residues 328–343 (GLYVQDILGYSALRAG) lie on the Extracellular side of the membrane. A helical transmembrane segment spans residues 344–364 (VGFIPFVIAMGIGLGVSSQLV). At 365–370 (SRFSPR) the chain is on the cytoplasmic side. A helical transmembrane segment spans residues 371 to 391 (VLTIGGGYLLFGAMLYGSFFM). Topologically, residues 392–400 (HRGVPYFPN) are extracellular. Residues 401–421 (LVMPIVVGGIGIGMAVVPLTL) form a helical membrane-spanning segment. Residues 422–437 (SAIAGVGFDQIGPVSA) are Cytoplasmic-facing. The chain crosses the membrane as a helical span at residues 438 to 458 (IALMLQSLGGPLVLAVIQAVI). Over 459 to 488 (TSRTLYLGGTTGPVKFMNDVQLAALDHAYT) the chain is Extracellular. Residues 489-509 (YGLLWVAGAAIIVGGMALFIG) form a helical membrane-spanning segment. At 510-530 (YTPQQVAHAQEVKEAIDAGEL) the chain is on the cytoplasmic side.

The protein belongs to the major facilitator superfamily.

The protein localises to the cell membrane. This is an uncharacterized protein from Mycobacterium tuberculosis (strain CDC 1551 / Oshkosh).